The primary structure comprises 730 residues: MIVNEQLAIDHGLKKDEYKKICDLLKRVPNITELGIFSAMWNEHCSYKSSRFHLKNLPTKGKNVIQGPGENAGVIDIGDDDAIVFKIESHNHPSFIEPYQGAATGVGGIMRDVFTMGARPIANLNSIHFGSPQHKKTKNLLRGVVHGIGGYGNCMGVPTIAGQTSFDESYNGNILVNAMTLGHVKKDKIFYSKAAGLGKPVIYVGSKTGRDGIHGASMASASFDDKIEEKKPTVQVGDPFTEKLLLEACLELMAGDSIIAIQDMGAAGLTSSSIEMASKGNLGIEINLSKVPCREANMSPYEIMLSESQERMLIVLENGKEEMAKKIFDKWNLDFAVIGQTTKSKKIELYFNEEKVADIPVNTLVENSPMYDRKWKKAKLPKRIKVDKEQFKTLKVKNVLNKILSNPNVCSKEWIWQQYDHTVMGDTIQKPGGDAGVVRVHGTNKAVAASVDSSAVYCWAHPLSGGKQIVCESWRNLISVGAKPIAITNCLNFGSPENEENMGEFVECVQGLGEASAYLEFPVVSGNVSFYNQTKDIGIKPTPAIGGVGLIKDYQNMVTMDLKEADNILLVIGKTEGHLDQSLFARDILNEKNGPPPEINLFNEKNNGETILKLINKKFIKSAHDVSLGGIITALSKMCIKGKKGATLKKSNYLINQFEYLFGEDQGRYIIEISKDDLENATKILQENSVHFDELGLVNEDGLIIDDKTKVSIDDLIKSHTNWLTNYMEN.

Histidine 44 is a catalytic residue. Residues tyrosine 47 and lysine 86 each coordinate ATP. Position 88 (glutamate 88) interacts with Mg(2+). Residues 89–92 and arginine 111 each bind substrate; that span reads SHNH. The Proton acceptor role is filled by histidine 90. Aspartate 112 lines the Mg(2+) pocket. Glutamine 235 serves as a coordination point for substrate. Aspartate 263 contributes to the Mg(2+) binding site. 307–309 serves as a coordination point for substrate; sequence ESQ. Residues asparagine 489 and glycine 526 each contribute to the ATP site. Mg(2+) is bound at residue asparagine 527. Serine 529 provides a ligand contact to substrate.

It belongs to the FGAMS family. As to quaternary structure, monomer. Part of the FGAM synthase complex composed of 1 PurL, 1 PurQ and 2 PurS subunits.

The protein localises to the cytoplasm. It catalyses the reaction N(2)-formyl-N(1)-(5-phospho-beta-D-ribosyl)glycinamide + L-glutamine + ATP + H2O = 2-formamido-N(1)-(5-O-phospho-beta-D-ribosyl)acetamidine + L-glutamate + ADP + phosphate + H(+). It participates in purine metabolism; IMP biosynthesis via de novo pathway; 5-amino-1-(5-phospho-D-ribosyl)imidazole from N(2)-formyl-N(1)-(5-phospho-D-ribosyl)glycinamide: step 1/2. Functionally, part of the phosphoribosylformylglycinamidine synthase complex involved in the purines biosynthetic pathway. Catalyzes the ATP-dependent conversion of formylglycinamide ribonucleotide (FGAR) and glutamine to yield formylglycinamidine ribonucleotide (FGAM) and glutamate. The FGAM synthase complex is composed of three subunits. PurQ produces an ammonia molecule by converting glutamine to glutamate. PurL transfers the ammonia molecule to FGAR to form FGAM in an ATP-dependent manner. PurS interacts with PurQ and PurL and is thought to assist in the transfer of the ammonia molecule from PurQ to PurL. This chain is Phosphoribosylformylglycinamidine synthase subunit PurL, found in Pelagibacter ubique (strain HTCC1062).